The chain runs to 349 residues: S-adenosylmethionine:tRNA ribosyltransferase-isomerase (349 aa).

It belongs to the QueA family. In terms of assembly, monomer.

Its subcellular location is the cytoplasm. The enzyme catalyses 7-aminomethyl-7-carbaguanosine(34) in tRNA + S-adenosyl-L-methionine = epoxyqueuosine(34) in tRNA + adenine + L-methionine + 2 H(+). The protein operates within tRNA modification; tRNA-queuosine biosynthesis. Transfers and isomerizes the ribose moiety from AdoMet to the 7-aminomethyl group of 7-deazaguanine (preQ1-tRNA) to give epoxyqueuosine (oQ-tRNA). This Ruegeria pomeroyi (strain ATCC 700808 / DSM 15171 / DSS-3) (Silicibacter pomeroyi) protein is S-adenosylmethionine:tRNA ribosyltransferase-isomerase.